A 108-amino-acid chain; its full sequence is ATP-dependent Clp protease adapter protein ClpS (108 aa).

The segment covering 1-15 has biased composition (basic and acidic residues); it reads MPRESSPDSHHEHGV. A disordered region spans residues 1 to 24; the sequence is MPRESSPDSHHEHGVAVEPARPEV.

This sequence belongs to the ClpS family. Binds to the N-terminal domain of the chaperone ClpA.

In terms of biological role, involved in the modulation of the specificity of the ClpAP-mediated ATP-dependent protein degradation. The polypeptide is ATP-dependent Clp protease adapter protein ClpS (Stenotrophomonas maltophilia (strain R551-3)).